The primary structure comprises 56 residues: Large ribosomal subunit protein bL32 (56 aa).

The interval methionine 1–glutamate 35 is disordered.

Belongs to the bacterial ribosomal protein bL32 family.

In Proteus mirabilis (strain HI4320), this protein is Large ribosomal subunit protein bL32.